Reading from the N-terminus, the 617-residue chain is Solute carrier family 2, facilitated glucose transporter member 12 (617 aa).

Positions 1–29 are disordered; that stretch reads MVPVENTEGPSLLNQKGTAVETEGSGSRH. The Cytoplasmic segment spans residues 1-44; the sequence is MVPVENTEGPSLLNQKGTAVETEGSGSRHPPWARGCGMFTFLSS. Polar residues predominate over residues 8–17; sequence EGPSLLNQKG. A helical transmembrane segment spans residues 45–65; the sequence is VTAAVSGLLVGYELGIISGAL. The Extracellular portion of the chain corresponds to 66–80; sequence LQIKTLLALSCHEQE. The chain crosses the membrane as a helical span at residues 81–101; sequence MVVSSLVIGALLASLTGGVLI. Over 102-115 the chain is Cytoplasmic; the sequence is DRYGRRTAIILSSC. A helical transmembrane segment spans residues 116–136; sequence LLGLGSLVLILSLSYTVLIVG. A topological domain (extracellular) is located at residue Arg137. A helical membrane pass occupies residues 138-158; it reads IAIGVSISLSSIATCVYIAEI. Topologically, residues 159–172 are cytoplasmic; sequence APQHRRGLLVSLNE. A helical membrane pass occupies residues 173-193; it reads LMIVIGILSAYISNYAFANVF. Residues 194–197 lie on the Extracellular side of the membrane; it reads HGWK. Residues 198–218 traverse the membrane as a helical segment; it reads YMFGLVIPLGVLQAIAMYFLP. The Cytoplasmic segment spans residues 219-278; the sequence is PSPRFLVMKGQEGAASKVLGRLRALSDTTEELTVIKSSLKDEYQYSFWDLFRSKDNMRTR. The chain crosses the membrane as a helical span at residues 279–299; the sequence is IMIGLTLVFFVQITGQPNILF. The Extracellular segment spans residues 300–317; the sequence is YASTVLKSVGFQSNEAAS. A helical membrane pass occupies residues 318–338; it reads LASTGVGVVKVISTIPATLLV. Topologically, residues 339–345 are cytoplasmic; sequence DHVGSKT. Residues 346-366 form a helical membrane-spanning segment; sequence FLCIGSSVMAASLVTMGIVNL. Over 367-466 the chain is Extracellular; sequence NIHMNFTHIC…PAFLKWLSLA (100 aa). 4 N-linked (GlcNAc...) asparagine glycosylation sites follow: Asn371, Asn383, Asn396, and Asn401. A helical membrane pass occupies residues 467 to 487; the sequence is SLLVYVAAFSIGLGPMPWLVL. Residues 488-498 lie on the Cytoplasmic side of the membrane; that stretch reads SEIFPGGIRGR. Residues 499-519 form a helical membrane-spanning segment; the sequence is AMALTSSMNWGINLLISLTFL. Topologically, residues 520–528 are extracellular; sequence TVTDLIGLP. Residues 529 to 549 traverse the membrane as a helical segment; the sequence is WVCFIYTIMSLASLLFVVMFI. Topologically, residues 550-617 are cytoplasmic; that stretch reads PETKGCSLEQ…GQSRQLSPET (68 aa).

Belongs to the major facilitator superfamily. Sugar transporter (TC 2.A.1.1) family. Glucose transporter subfamily. Predominantly expressed in skeletal muscle, heart and prostate, with lower levels in brain, placenta and kidney.

Its subcellular location is the cell membrane. The protein localises to the endomembrane system. The protein resides in the cytoplasm. It localises to the perinuclear region. The enzyme catalyses D-glucose(out) = D-glucose(in). Functionally, insulin-independent facilitative glucose transporter. This is Solute carrier family 2, facilitated glucose transporter member 12 from Homo sapiens (Human).